Consider the following 251-residue polypeptide: Ubiquinone/menaquinone biosynthesis C-methyltransferase UbiE (251 aa).

S-adenosyl-L-methionine contacts are provided by residues threonine 74, aspartate 95, and 123–124; that span reads NA.

This sequence belongs to the class I-like SAM-binding methyltransferase superfamily. MenG/UbiE family.

The catalysed reaction is a 2-demethylmenaquinol + S-adenosyl-L-methionine = a menaquinol + S-adenosyl-L-homocysteine + H(+). It catalyses the reaction a 2-methoxy-6-(all-trans-polyprenyl)benzene-1,4-diol + S-adenosyl-L-methionine = a 5-methoxy-2-methyl-3-(all-trans-polyprenyl)benzene-1,4-diol + S-adenosyl-L-homocysteine + H(+). The protein operates within quinol/quinone metabolism; menaquinone biosynthesis; menaquinol from 1,4-dihydroxy-2-naphthoate: step 2/2. It functions in the pathway cofactor biosynthesis; ubiquinone biosynthesis. Functionally, methyltransferase required for the conversion of demethylmenaquinol (DMKH2) to menaquinol (MKH2) and the conversion of 2-polyprenyl-6-methoxy-1,4-benzoquinol (DDMQH2) to 2-polyprenyl-3-methyl-6-methoxy-1,4-benzoquinol (DMQH2). The sequence is that of Ubiquinone/menaquinone biosynthesis C-methyltransferase UbiE from Marinomonas sp. (strain MWYL1).